Reading from the N-terminus, the 334-residue chain is D-aspartate oxidase 2 (334 aa).

Residues Asp-38, Lys-39, Ser-46, Gly-310, and Thr-315 each contribute to the FAD site.

The protein belongs to the DAMOX/DASOX family. Requires FAD as cofactor. Expressed in the intestinal cells, pharyngeal muscles, and body wall muscles in adult hermaphrodites.

It localises to the cytoplasm. The enzyme catalyses D-aspartate + O2 + H2O = oxaloacetate + H2O2 + NH4(+). It carries out the reaction D-glutamate + O2 + H2O = H2O2 + 2-oxoglutarate + NH4(+). Its activity is regulated as follows. Inhibited by thiolactomycin. Its function is as follows. Selectively catalyzes the oxidative deamination of acidic amino acids. May play a role in the egg-laying events and early development of the worm, in addition to quality control of the germ cells. The protein is D-aspartate oxidase 2 (ddo-2) of Caenorhabditis elegans.